Reading from the N-terminus, the 302-residue chain is tRNA-cytidine(32) 2-sulfurtransferase (302 aa).

The PP-loop motif motif lies at Ser45 to Ser50. [4Fe-4S] cluster-binding residues include Cys120, Cys123, and Cys211.

It belongs to the TtcA family. In terms of assembly, homodimer. Mg(2+) is required as a cofactor. Requires [4Fe-4S] cluster as cofactor.

The protein localises to the cytoplasm. It carries out the reaction cytidine(32) in tRNA + S-sulfanyl-L-cysteinyl-[cysteine desulfurase] + AH2 + ATP = 2-thiocytidine(32) in tRNA + L-cysteinyl-[cysteine desulfurase] + A + AMP + diphosphate + H(+). It functions in the pathway tRNA modification. In terms of biological role, catalyzes the ATP-dependent 2-thiolation of cytidine in position 32 of tRNA, to form 2-thiocytidine (s(2)C32). The sulfur atoms are provided by the cysteine/cysteine desulfurase (IscS) system. This Cellvibrio japonicus (strain Ueda107) (Pseudomonas fluorescens subsp. cellulosa) protein is tRNA-cytidine(32) 2-sulfurtransferase.